The primary structure comprises 161 residues: Cell wall protein YLR042C (161 aa).

Positions 1–24 are cleaved as a signal peptide; sequence MKISQFGSLAFAPIVLLQLFIVQA. Residues N77, N104, and N120 are each glycosylated (N-linked (GlcNAc...) asparagine). Residues 111-139 form a disordered region; the sequence is FTPLPSSSRNETKSSQTTNTISSSTSTGG. Residues 123-137 are compositionally biased toward low complexity; it reads KSSQTTNTISSSTST. G139 carries GPI-anchor amidated glycine lipidation. A propeptide spans 140–161 (removed in mature form); that stretch reads VGSVKPCLYFVLMLETIAYLFS.

The GPI-anchor is attached to the protein in the endoplasmic reticulum and serves to target the protein to the cell surface. There, the glucosamine-inositol phospholipid moiety is cleaved off and the GPI-modified mannoprotein is covalently attached via its lipidless GPI glycan remnant to the 1,6-beta-glucan of the outer cell wall layer.

The protein resides in the secreted. The protein localises to the cell wall. Its subcellular location is the membrane. The sequence is that of Cell wall protein YLR042C from Saccharomyces cerevisiae (strain ATCC 204508 / S288c) (Baker's yeast).